The sequence spans 215 residues: 3,4-dihydroxy-2-butanone 4-phosphate synthase (215 aa).

D-ribulose 5-phosphate-binding positions include Arg-38 to Glu-39, Asp-43, Arg-151 to Thr-155, and Glu-175. Glu-39 lines the Mg(2+) pocket. Residue His-154 coordinates Mg(2+).

The protein belongs to the DHBP synthase family. Homodimer. The cofactor is Mg(2+). It depends on Mn(2+) as a cofactor.

It carries out the reaction D-ribulose 5-phosphate = (2S)-2-hydroxy-3-oxobutyl phosphate + formate + H(+). The protein operates within cofactor biosynthesis; riboflavin biosynthesis; 2-hydroxy-3-oxobutyl phosphate from D-ribulose 5-phosphate: step 1/1. In terms of biological role, catalyzes the conversion of D-ribulose 5-phosphate to formate and 3,4-dihydroxy-2-butanone 4-phosphate. The chain is 3,4-dihydroxy-2-butanone 4-phosphate synthase from Haemophilus influenzae (strain PittEE).